A 444-amino-acid polypeptide reads, in one-letter code: Chitinase-like protein Idgf4 (444 aa).

A signal peptide spans 1-22 (MKLLLILLGALLAVLTIKRTSA). The GH18 domain maps to 27–444 (NHLICYYDGT…ILRAIKFKFQ (418 aa)). A disulfide bridge connects residues Cys31 and Cys58. An N-linked (GlcNAc...) asparagine glycan is attached at Asn226. Cys345 and Cys428 are joined by a disulfide.

It belongs to the glycosyl hydrolase 18 family. IDGF subfamily. Post-translationally, glycosylated.

The protein resides in the secreted. Functionally, cooperates with insulin-like peptides to stimulate the proliferation, polarization and motility of imaginal disk cells. May act by stabilizing the binding of insulin-like peptides to its receptor through a simultaneous interaction with both molecules to form a multiprotein signaling complex. In Glossina morsitans morsitans (Savannah tsetse fly), this protein is Chitinase-like protein Idgf4 (Idgf4).